Reading from the N-terminus, the 255-residue chain is Imidazole glycerol phosphate synthase subunit HisF (255 aa).

Active-site residues include Asp12 and Asp131.

Belongs to the HisA/HisF family. In terms of assembly, heterodimer of HisH and HisF.

It is found in the cytoplasm. The catalysed reaction is 5-[(5-phospho-1-deoxy-D-ribulos-1-ylimino)methylamino]-1-(5-phospho-beta-D-ribosyl)imidazole-4-carboxamide + L-glutamine = D-erythro-1-(imidazol-4-yl)glycerol 3-phosphate + 5-amino-1-(5-phospho-beta-D-ribosyl)imidazole-4-carboxamide + L-glutamate + H(+). The protein operates within amino-acid biosynthesis; L-histidine biosynthesis; L-histidine from 5-phospho-alpha-D-ribose 1-diphosphate: step 5/9. Its function is as follows. IGPS catalyzes the conversion of PRFAR and glutamine to IGP, AICAR and glutamate. The HisF subunit catalyzes the cyclization activity that produces IGP and AICAR from PRFAR using the ammonia provided by the HisH subunit. The chain is Imidazole glycerol phosphate synthase subunit HisF from Salinispora arenicola (strain CNS-205).